Consider the following 183-residue polypeptide: ATP synthase subunit delta (183 aa).

Belongs to the ATPase delta chain family. F-type ATPases have 2 components, F(1) - the catalytic core - and F(0) - the membrane proton channel. F(1) has five subunits: alpha(3), beta(3), gamma(1), delta(1), epsilon(1). F(0) has three main subunits: a(1), b(2) and c(10-14). The alpha and beta chains form an alternating ring which encloses part of the gamma chain. F(1) is attached to F(0) by a central stalk formed by the gamma and epsilon chains, while a peripheral stalk is formed by the delta and b chains.

The protein localises to the cell membrane. F(1)F(0) ATP synthase produces ATP from ADP in the presence of a proton or sodium gradient. F-type ATPases consist of two structural domains, F(1) containing the extramembraneous catalytic core and F(0) containing the membrane proton channel, linked together by a central stalk and a peripheral stalk. During catalysis, ATP synthesis in the catalytic domain of F(1) is coupled via a rotary mechanism of the central stalk subunits to proton translocation. Its function is as follows. This protein is part of the stalk that links CF(0) to CF(1). It either transmits conformational changes from CF(0) to CF(1) or is implicated in proton conduction. The chain is ATP synthase subunit delta from Mycoplasmopsis synoviae (strain 53) (Mycoplasma synoviae).